The chain runs to 61 residues: [Thr6, Val10, Asp11]-phyllokinin (61 aa).

The N-terminal stretch at 1 to 22 is a signal peptide; that stretch reads MSFLKKSLFLVLFLGLVSFSIC. Residues 23 to 50 constitute a propeptide that is removed on maturation; the sequence is EEEKRETEEEENEDEMNEESEEKRESPE. Positions 24–61 are disordered; sequence EEKRETEEEENEDEMNEESEEKRESPERPPGFTPFRVD. A compositionally biased stretch (acidic residues) spans 30–42; it reads EEEENEDEMNEES.

This sequence belongs to the frog skin active peptide (FSAP) family. Bradykinin-related peptide subfamily. In terms of tissue distribution, expressed by the skin glands.

It is found in the secreted. Its function is as follows. Induces relaxation of rat smooth muscle from tail artery and contraction of that from ileum, urinary bladder and uterus. Binds to both bradykinin receptor B1 (BDKRB1) and B2 (BDKRB2). The sequence is that of [Thr6, Val10, Asp11]-phyllokinin from Agalychnis spurrelli (Gliding leaf frog).